Consider the following 196-residue polypeptide: Rho-related GTP-binding protein RhoB (196 aa).

A GTP-binding site is contributed by Gly12–Thr19. O-linked (GlcNAc) tyrosine; by Photorhabdus PAU_02230 glycosylation occurs at Tyr34. The Effector region motif lies at Tyr34–Tyr42. Thr37 is a glycosylation site ((Microbial infection) O-linked (Glc) threonine; by C.difficile toxins TcdA and TcdB). Residue Asn41 is modified to ADP-ribosylasparagine; by botulinum toxin. GTP-binding positions include Asp59–Gln63 and Asn117–Asp120. Tyr154 bears the Phosphotyrosine mark. Residues Cys189 and Cys192 are each lipidated (S-palmitoyl cysteine). At Cys193 the chain carries Cysteine methyl ester. The S-farnesyl cysteine; in plasma membrane form moiety is linked to residue Cys193. The S-geranylgeranyl cysteine; in endosomal form moiety is linked to residue Cys193. Positions Lys194–Leu196 are cleaved as a propeptide — removed in mature form.

It belongs to the small GTPase superfamily. Rho family. In terms of assembly, binds ROCK1 and ROCK2. Also binds PKN1/PRK1. Interacts with ARGGEF3. Interacts with RTKN. Interacts with AKAP13. Interacts with RIPOR1. Post-translationally, prenylation specifies the subcellular location of RHOB. The farnesylated form is localized to the plasma membrane while the geranylgeranylated form is localized to the endosome. (Microbial infection) Glycosylated at Tyr-34 by Photorhabdus asymbiotica toxin PAU_02230. Mono-O-GlcNAcylation by PAU_02230 inhibits downstream signaling by an impaired interaction with diverse regulator and effector proteins of Rho and leads to actin disassembly. In terms of processing, (Microbial infection) Glucosylated at Thr-37 by C.difficile toxins TcdA and TcdB in the colonic epithelium. Monoglucosylation completely prevents the recognition of the downstream effector, blocking the GTPases in their inactive form, leading to actin cytoskeleton disruption.

It localises to the late endosome membrane. The protein localises to the cell membrane. The protein resides in the nucleus. It is found in the cleavage furrow. In terms of biological role, mediates apoptosis in neoplastically transformed cells after DNA damage. Not essential for development but affects cell adhesion and growth factor signaling in transformed cells. Plays a negative role in tumorigenesis as deletion causes tumor formation. Involved in intracellular protein trafficking of a number of proteins. Targets PKN1 to endosomes and is involved in trafficking of the EGF receptor from late endosomes to lysosomes. Also required for stability and nuclear trafficking of AKT1/AKT which promotes endothelial cell survival during vascular development. Serves as a microtubule-dependent signal that is required for the myosin contractile ring formation during cell cycle cytokinesis. Required for genotoxic stress-induced cell death in breast cancer cells. The polypeptide is Rho-related GTP-binding protein RhoB (RHOB) (Homo sapiens (Human)).